Here is a 91-residue protein sequence, read N- to C-terminus: Insertion element IS1 2 protein InsA (91 aa).

It belongs to the IS1 elements InsA family.

Its function is as follows. Absolutely required for transposition of IS1. The protein is Insertion element IS1 2 protein InsA (insA2) of Escherichia coli (strain K12).